Consider the following 359-residue polypeptide: 3-dehydroquinate synthase (359 aa).

NAD(+)-binding positions include Asp-70–Lys-75, Gly-105–Asp-109, Thr-129–Thr-130, Lys-142, Lys-151, and Phe-169–Thr-172. Residues Glu-184, His-247, and His-264 each contribute to the Zn(2+) site.

The protein belongs to the sugar phosphate cyclases superfamily. Dehydroquinate synthase family. Co(2+) is required as a cofactor. It depends on Zn(2+) as a cofactor. The cofactor is NAD(+).

It is found in the cytoplasm. It carries out the reaction 7-phospho-2-dehydro-3-deoxy-D-arabino-heptonate = 3-dehydroquinate + phosphate. The protein operates within metabolic intermediate biosynthesis; chorismate biosynthesis; chorismate from D-erythrose 4-phosphate and phosphoenolpyruvate: step 2/7. Catalyzes the conversion of 3-deoxy-D-arabino-heptulosonate 7-phosphate (DAHP) to dehydroquinate (DHQ). The protein is 3-dehydroquinate synthase of Francisella tularensis subsp. holarctica (strain FTNF002-00 / FTA).